The chain runs to 334 residues: Dolichyl-phosphate beta-glucosyltransferase (334 aa).

Topologically, residues 1–12 (MRALRFLIENRN) are lumenal. The chain crosses the membrane as a helical span at residues 13–33 (TVFFTLLVALVLSLYLLVYLF). Residues 34 to 334 (SHTPRPPYPE…LGIYRDNKKC (301 aa)) are Cytoplasmic-facing.

The protein belongs to the glycosyltransferase 2 family.

It localises to the endoplasmic reticulum membrane. It carries out the reaction a di-trans,poly-cis-dolichyl phosphate + UDP-alpha-D-glucose = a di-trans,poly-cis-dolichyl beta-D-glucosyl phosphate + UDP. It participates in protein modification; protein glycosylation. In terms of biological role, endoplasmic reticulum membrane-bound UDP-glucose:dolichyl-phosphate glucosyltransferase involved in protein N-linked glycosylation. This Saccharomyces cerevisiae (strain ATCC 204508 / S288c) (Baker's yeast) protein is Dolichyl-phosphate beta-glucosyltransferase.